A 254-amino-acid polypeptide reads, in one-letter code: Sensory transduction protein LytR (254 aa).

The region spanning 2-116 is the Response regulatory domain; the sequence is RAIIVDDEPL…RIAQAVHKVE (115 aa). Residue D53 is modified to 4-aspartylphosphate. Positions 120-143 are disordered; that stretch reads GQTTEHHSDSYTTASMDTQNNEKT. The span at 129–138 shows a compositional bias: polar residues; it reads SYTTASMDTQ. Residues 149-253 enclose the HTH LytTR-type domain; sequence LPIEVNERIH…MKTFKQMMGL (105 aa).

Phosphorylated by LytS.

It is found in the cytoplasm. In terms of biological role, member of the two-component regulatory system LytR/LytS that probably regulates genes involved in cell wall metabolism. This chain is Sensory transduction protein LytR (lytR), found in Staphylococcus saprophyticus subsp. saprophyticus (strain ATCC 15305 / DSM 20229 / NCIMB 8711 / NCTC 7292 / S-41).